Reading from the N-terminus, the 630-residue chain is Conserved oligomeric Golgi complex subunit 6 (630 aa).

This sequence belongs to the COG6 family. As to quaternary structure, component of the conserved oligomeric Golgi complex which is composed of eight different subunits and is required for normal Golgi morphology and localization.

It is found in the golgi apparatus membrane. Its function is as follows. Required for normal Golgi function. This Drosophila melanogaster (Fruit fly) protein is Conserved oligomeric Golgi complex subunit 6.